We begin with the raw amino-acid sequence, 411 residues long: MSISFDLTIDDTRDQLARHARASLEAKPSLIGMSREEMAAALIAAGVPERQVKMRISQLWHWLYVRGVSDFADMRNISKDLRAMLAQHFTIARPEVVEEQISQDGTRKWLFRFPPRSAGRPVEIESVYIPEEGRGTLCISSQVGCTLTCSFCHTGTQKLVRNLTSEEILAQLLTARDRLGDFPDKDTPDGAMVPAEGRKITNIVMMGMGEPLYNFEEVKKALLIASDGDGLSLSKRRITLSTSGVVPEIYRTGDEIGVMLAISLHAVRDELRDILVPINKKYPLAELIKACREYPGLSNAKRITFEYVMLKDINDSLDDAKLLVKLLQGIPAKINLIPFNPWPGTNYQCSDWEQIEKFADYVNAAGYASPIRTPRGRDILAACGQLKSESERLRKSERLALEAMMIAGHGE.

Glu-125 (proton acceptor) is an active-site residue. Residues 131 to 380 enclose the Radical SAM core domain; the sequence is EEGRGTLCIS…IRTPRGRDIL (250 aa). A disulfide bond links Cys-138 and Cys-383. [4Fe-4S] cluster is bound by residues Cys-145, Cys-149, and Cys-152. Residues 209-210, Ser-241, 263-265, and Asn-340 contribute to the S-adenosyl-L-methionine site; these read GE and SLH. Cys-383 functions as the S-methylcysteine intermediate in the catalytic mechanism.

This sequence belongs to the radical SAM superfamily. RlmN family. It depends on [4Fe-4S] cluster as a cofactor.

It localises to the cytoplasm. The catalysed reaction is adenosine(2503) in 23S rRNA + 2 reduced [2Fe-2S]-[ferredoxin] + 2 S-adenosyl-L-methionine = 2-methyladenosine(2503) in 23S rRNA + 5'-deoxyadenosine + L-methionine + 2 oxidized [2Fe-2S]-[ferredoxin] + S-adenosyl-L-homocysteine. It catalyses the reaction adenosine(37) in tRNA + 2 reduced [2Fe-2S]-[ferredoxin] + 2 S-adenosyl-L-methionine = 2-methyladenosine(37) in tRNA + 5'-deoxyadenosine + L-methionine + 2 oxidized [2Fe-2S]-[ferredoxin] + S-adenosyl-L-homocysteine. Specifically methylates position 2 of adenine 2503 in 23S rRNA and position 2 of adenine 37 in tRNAs. m2A2503 modification seems to play a crucial role in the proofreading step occurring at the peptidyl transferase center and thus would serve to optimize ribosomal fidelity. The sequence is that of Dual-specificity RNA methyltransferase RlmN from Brucella melitensis biotype 2 (strain ATCC 23457).